A 340-amino-acid chain; its full sequence is Replication initiation protein (340 aa).

Residues 38-58 are disordered; sequence PERKRTKRRRGEHSTKPKCEN.

The chain is Replication initiation protein (repA1) from Escherichia coli.